Here is a 382-residue protein sequence, read N- to C-terminus: MLNMESAGVSAAMAGLSKSLTTPFSINDILTRSNPETRRMSSVDSEPEPEKLKPSSDRERSISKSPPLCCRDLGLYKLTQPKEIQPSARQPSNYLQYYAAAMDNNNHHHQATGTSNSSAADYMQRKLAYFGSTLAAPLDMRRCTSNDSDCDSPPPLSSSPSESPLSHDGSGLSRKKRSRAAFSHAQVFELERRFAQQRYLSGPERSEMAKSLRLTETQVKIWFQNRRYKTKRKQIQQHEAALLGASKRVPVQVLVREDGSTTYAHMAAPGAGHGLDPALINIYRHQLQLAYGGLPLPQMQMPFPYFYPQHKVPQPIPPPTQSSSFVTASSASSSPVPIPIPGAVRPQRTPCPSPNGQMMSVESGAESVHSAAEDVDENVEID.

Disordered stretches follow at residues 27–66 (NDILTRSNPETRRMSSVDSEPEPEKLKPSSDRERSISKSP), 144–178 (TSNDSDCDSPPPLSSSPSESPLSHDGSGLSRKKRS), and 314–382 (QPIP…VEID). The segment covering 48-62 (EPEKLKPSSDRERSI) has biased composition (basic and acidic residues). Low complexity predominate over residues 158-170 (SSPSESPLSHDGS). A DNA-binding region (homeobox) is located at residues 175 to 234 (KKRSRAAFSHAQVFELERRFAQQRYLSGPERSEMAKSLRLTETQVKIWFQNRRYKTKRKQ). The segment covering 321–335 (QSSSFVTASSASSSP) has biased composition (low complexity). Residues 373 to 382 (EDVDENVEID) show a composition bias toward acidic residues.

It belongs to the NK-3 homeobox family. Is expressed in a segmented pattern in visceral muscle and in a subset of cardiac muscles. Loss of activity results in segmental gaps in midgut visceral muscle.

Its subcellular location is the nucleus. Involved in the determination of cell fates in the dorsal mesoderm. This Drosophila melanogaster (Fruit fly) protein is Homeobox protein bagpipe (bap).